Reading from the N-terminus, the 144-residue chain is Large ribosomal subunit protein uL13 (144 aa).

The protein belongs to the universal ribosomal protein uL13 family. As to quaternary structure, part of the 50S ribosomal subunit.

Functionally, this protein is one of the early assembly proteins of the 50S ribosomal subunit, although it is not seen to bind rRNA by itself. It is important during the early stages of 50S assembly. This Herpetosiphon aurantiacus (strain ATCC 23779 / DSM 785 / 114-95) protein is Large ribosomal subunit protein uL13.